The chain runs to 679 residues: Dihydroxyacetone phosphate acyltransferase (679 aa).

Serine 11 bears the Phosphoserine mark. Positions 161–166 (HRSYID) match the HXXXXD motif motif. Lysine 642 is modified (N6-acetyllysine).

It belongs to the GPAT/DAPAT family. Part of a heterotrimeric complex composed of GNPAT, AGPS and a modified form of GNPAT.

The protein localises to the peroxisome membrane. It carries out the reaction dihydroxyacetone phosphate + an acyl-CoA = a 1-acylglycerone 3-phosphate + CoA. The catalysed reaction is dihydroxyacetone phosphate + hexadecanoyl-CoA = 1-hexadecanoylglycerone 3-phosphate + CoA. It participates in membrane lipid metabolism; glycerophospholipid metabolism. Its function is as follows. Dihydroxyacetonephosphate acyltransferase catalyzing the first step in the biosynthesis of plasmalogens, a subset of phospholipids that differ from other glycerolipids by having an alkyl chain attached through a vinyl ether linkage at the sn-1 position of the glycerol backbone, and which unique physical properties have an impact on various aspects of cell signaling and membrane biology. The polypeptide is Dihydroxyacetone phosphate acyltransferase (Oryctolagus cuniculus (Rabbit)).